Consider the following 97-residue polypeptide: YcgL domain-containing protein Maqu_1609 (97 aa).

Residues 5 to 89 (EFVSVFRSSK…EQDTYIVDFK (85 aa)) form the YcgL domain.

The sequence is that of YcgL domain-containing protein Maqu_1609 from Marinobacter nauticus (strain ATCC 700491 / DSM 11845 / VT8) (Marinobacter aquaeolei).